We begin with the raw amino-acid sequence, 222 residues long: Ribonuclease 3 (222 aa).

The N-terminal stretch at 1 to 19 (MKFFIFILALQQLYVQSFA) is a signal peptide. An RNA-binding site is contributed by Gln-30. Cys-36 and Cys-42 form a disulfide bridge. RNA contacts are provided by residues His-57, Phe-107, 110–111 (HE), and 114–115 (KH). The Proton donor role is filled by His-57. Disulfide bonds link Cys-72/Cys-118, Cys-178/Cys-213, and Cys-194/Cys-205. The active site involves Glu-111. His-115 functions as the Proton acceptor in the catalytic mechanism.

It belongs to the RNase T2 family.

It catalyses the reaction a ribonucleotidyl-ribonucleotide-RNA + H2O = a 3'-end 3'-phospho-ribonucleotide-RNA + a 5'-end dephospho-ribonucleoside-RNA + H(+). Its function is as follows. May remobilize phosphate, particularly when cells senesce or when phosphate becomes limiting. The polypeptide is Ribonuclease 3 (RNS3) (Arabidopsis thaliana (Mouse-ear cress)).